Here is a 255-residue protein sequence, read N- to C-terminus: Enkurin (255 aa).

The span at 1–10 shows a compositional bias: polar residues; that stretch reads MDSPCTSESI. 2 disordered regions span residues 1-25 and 67-96; these read MDSP…PQHP and SKEK…DHPV. Positions 73 to 83 are enriched in basic residues; it reads PPKKKFNRCSP. Residues 83–89 carry the SH3-binding motif; the sequence is PKKPAVP. Residues 160-252 form the Enkurin domain; that stretch reads KRNEDVKKAQ…VIEKHKIIYI (93 aa). The interval 160-255 is interaction with TRPC proteins; that stretch reads KRNEDVKKAQ…KHKIIYIANK (96 aa). Positions 176–187 constitute an IQ domain; sequence IQENLKKAAMKR.

As to quaternary structure, microtubule inner protein component of sperm flagellar doublet microtubules. Binds calmodulin via its IQ domain. Interacts with TRPC1, TRPC2, TRPC5, but not TRPC3. Interacts with CFAP45. In terms of tissue distribution, high expression in testis and vomeronasal organ and lower expression in ovary, heart, lung, and brain. Not expressed in other tissues.

The protein resides in the cytoplasm. It is found in the cytoskeleton. The protein localises to the cilium axoneme. It localises to the flagellum axoneme. Functionally, adapter that functions to localize a calcium-sensitive signal transduction machinery in sperm to a calcium-permeable ion channel. Microtubule inner protein (MIP) part of the dynein-decorated doublet microtubules (DMTs) in cilia axoneme, which is required for motile cilia beating. This is Enkurin (Enkur) from Mus musculus (Mouse).